A 34-amino-acid polypeptide reads, in one-letter code: Cytochrome c oxidase polypeptide 2A (34 aa).

Met-1 carries the post-translational modification N-formylmethionine. A helical transmembrane segment spans residues 4–34; that stretch reads KPKGALAVILVLTLTILVFWLGVYAVFFARG.

It localises to the cell membrane. It catalyses the reaction 4 Fe(II)-[cytochrome c] + O2 + 8 H(+)(in) = 4 Fe(III)-[cytochrome c] + 2 H2O + 4 H(+)(out). In Thermus thermophilus (strain ATCC 27634 / DSM 579 / HB8), this protein is Cytochrome c oxidase polypeptide 2A (cbaD).